The primary structure comprises 210 residues: Probable nicotinate-nucleotide adenylyltransferase (210 aa).

It belongs to the NadD family.

It carries out the reaction nicotinate beta-D-ribonucleotide + ATP + H(+) = deamido-NAD(+) + diphosphate. It functions in the pathway cofactor biosynthesis; NAD(+) biosynthesis; deamido-NAD(+) from nicotinate D-ribonucleotide: step 1/1. Functionally, catalyzes the reversible adenylation of nicotinate mononucleotide (NaMN) to nicotinic acid adenine dinucleotide (NaAD). The protein is Probable nicotinate-nucleotide adenylyltransferase of Vesicomyosocius okutanii subsp. Calyptogena okutanii (strain HA).